We begin with the raw amino-acid sequence, 96 residues long: Small ribosomal subunit protein uS19 (96 aa).

Belongs to the universal ribosomal protein uS19 family.

Its function is as follows. Protein S19 forms a complex with S13 that binds strongly to the 16S ribosomal RNA. This chain is Small ribosomal subunit protein uS19, found in Gemmatimonas aurantiaca (strain DSM 14586 / JCM 11422 / NBRC 100505 / T-27).